The following is a 220-amino-acid chain: LHFPL tetraspan subfamily member 1 protein (220 aa).

Residues 1–20 form the signal peptide; it reads MRNSLTMVGTFWAFLSLVTA. The next 2 helical transmembrane spans lie at 86 to 106 and 122 to 142; these read VVTGAGCALLLLVALAAVLGC and AAQFVGGLLISAGCALYPLGW. N153 is a glycosylation site (N-linked (GlcNAc...) asparagine). A helical transmembrane segment spans residues 165-185; it reads LGWAYYCAGGGAAAAMLICTW.

It belongs to the LHFP family. In terms of tissue distribution, widely expressed. Strongly expressed in vagina and ovary. Weakly expressed in spleen, kidney, thymus, testis, brain, lung, intestine and uterus.

It is found in the membrane. This Mus musculus (Mouse) protein is LHFPL tetraspan subfamily member 1 protein.